Reading from the N-terminus, the 338-residue chain is Glutamyl-tRNA reductase (338 aa).

Residues 50 to 53 (TCHR), S102, 107 to 109 (ETE), and Q113 contribute to the substrate site. Residue C51 is the Nucleophile of the active site. 181–186 (GYSEIN) contacts NADP(+).

It belongs to the glutamyl-tRNA reductase family. As to quaternary structure, homodimer.

It carries out the reaction (S)-4-amino-5-oxopentanoate + tRNA(Glu) + NADP(+) = L-glutamyl-tRNA(Glu) + NADPH + H(+). It participates in porphyrin-containing compound metabolism; protoporphyrin-IX biosynthesis; 5-aminolevulinate from L-glutamyl-tRNA(Glu): step 1/2. Its function is as follows. Catalyzes the NADPH-dependent reduction of glutamyl-tRNA(Glu) to glutamate 1-semialdehyde (GSA). The polypeptide is Glutamyl-tRNA reductase (Chlamydia abortus (strain DSM 27085 / S26/3) (Chlamydophila abortus)).